We begin with the raw amino-acid sequence, 550 residues long: Protein UshA (550 aa).

Positions 1 to 25 (MKLLQRGVALALLTTFTLASETALA) are cleaved as a signal peptide. Zn(2+)-binding residues include aspartate 41, histidine 43, aspartate 84, asparagine 116, histidine 217, histidine 252, and glutamine 254. A disulfide bond links cysteine 258 and cysteine 275. Substrate is bound by residues 375 to 379 (RDKVR) and 498 to 504 (FNATGGD).

The protein belongs to the 5'-nucleotidase family. In terms of assembly, monomer. Zn(2+) serves as cofactor.

The protein resides in the periplasm. The enzyme catalyses UDP-sugar + H2O = UMP + alpha-D-aldose 1-phosphate.. The catalysed reaction is a ribonucleoside 5'-phosphate + H2O = a ribonucleoside + phosphate. Its activity is regulated as follows. The activity of this protein is inhibited by an intracellular protein inhibitor. In terms of biological role, degradation of external UDP-glucose to uridine monophosphate and glucose-1-phosphate, which can then be used by the cell. This is Protein UshA (ushA) from Escherichia coli (strain K12).